The sequence spans 618 residues: Dihydroxy-acid dehydratase (618 aa).

Mg(2+) is bound at residue aspartate 81. Cysteine 122 contributes to the [2Fe-2S] cluster binding site. The Mg(2+) site is built by aspartate 123 and lysine 124. N6-carboxylysine is present on lysine 124. Residue cysteine 195 participates in [2Fe-2S] cluster binding. Glutamate 491 serves as a coordination point for Mg(2+). Catalysis depends on serine 517, which acts as the Proton acceptor.

Belongs to the IlvD/Edd family. As to quaternary structure, homodimer. [2Fe-2S] cluster serves as cofactor. It depends on Mg(2+) as a cofactor.

The catalysed reaction is (2R)-2,3-dihydroxy-3-methylbutanoate = 3-methyl-2-oxobutanoate + H2O. The enzyme catalyses (2R,3R)-2,3-dihydroxy-3-methylpentanoate = (S)-3-methyl-2-oxopentanoate + H2O. Its pathway is amino-acid biosynthesis; L-isoleucine biosynthesis; L-isoleucine from 2-oxobutanoate: step 3/4. The protein operates within amino-acid biosynthesis; L-valine biosynthesis; L-valine from pyruvate: step 3/4. Functionally, functions in the biosynthesis of branched-chain amino acids. Catalyzes the dehydration of (2R,3R)-2,3-dihydroxy-3-methylpentanoate (2,3-dihydroxy-3-methylvalerate) into 2-oxo-3-methylpentanoate (2-oxo-3-methylvalerate) and of (2R)-2,3-dihydroxy-3-methylbutanoate (2,3-dihydroxyisovalerate) into 2-oxo-3-methylbutanoate (2-oxoisovalerate), the penultimate precursor to L-isoleucine and L-valine, respectively. The protein is Dihydroxy-acid dehydratase of Rhodopseudomonas palustris (strain TIE-1).